The primary structure comprises 1316 residues: MDSQELKTLINYYCQERYFHHVLLVASEGIKRYGSDPVFRFYHAYGTLMEGKTQEALREFEAIKNKQDVSLCSLLALIYAHKMSPNPDREAILESDARVKEQRKGAGEKALYHAGLFLWHIGRHDKAREYIDRMIKISDGSKQGHVLKAWLDITRGKEPYTKKALKYFEEGLQDGNDTFALLGKAQCLEMRQNYSGALETVNQIIVNFPSFLPAFVKKMKLQLALQDWDQTVETAQRLLLQDSQNVEALRMQALYYVCREGDIEKASTKLENLGNTLDAMEPQNAQLFYNITLAFSRTCGRSQLILQKIQTLLERAFSLNPQQSEFATELGYQMILQGRVKEALKWYKTAMTLDETSVSALVGFIQCQLIEGQLQDADQQLEFLNEIQQSIGKSAELIYLHAVLAMKKNKRQEEVINLLNDVLDTHFSQLEGLPLGIQYFEKLNPDFLLEIVMEYLSFCPMQPASPGQPLCPLLRRCISVLETVVRTVPGLLQTVFLIAKVKYLSGDIEAAFNNLQHCLEHNPSYADAHLLLAQVYLSQEKVKLCSQSLELCLSYDFKVRDYPLYHLIKAQSQKKMGEIADAIKTLHMAMSLPGMKRIGASTKSKDRKTEVDTSHRLSIFLELIDVHRLNGEQHEATKVLQDAIHEFSGTSEEVRVTIANADLALAQGDIERALSILQNVTAEQPYFIEAREKMADIYLKHRKDKMLYITCFREIAERMANPRSFLLLGDAYMNILEPEEAIVAYEQALNQNPKDGTLASKMGKALIKTHNYSMAITYYEAALKTGQKNYLCYDLAELLLKLKWYDKAEKVLQHALAHEPVNELSALMEDGRCQVLLAKVYSKMEKLGDAITALQQARELQARVLKRVQMEQPDAVPAQKHLAAEICAEIAKHSVAQRDYEKAIKFYREALVHCETDNKIMLELARLYLAQDDPDSCLRQCALLLQSDQDNEAATMMMADLMFRKQDYEQAVFHLQQLLERKPDNYMTLSRLIDLLRRCGKLEDVPRFFSMAEKRNSRAKLEPGFQYCKGLYLWYTGEPNDALRHFNKARKDRDWGQNALYNMIEICLNPDNETVGGEVFENLDGDLGNSTEKQESVQLAVRTAEKLLKELKPQTVQGHVQLRIMENYCLMATKQKSNVEQALNTFTEIAASEKEHIPALLGMATAYMILKQTPRARNQLKRIAKMNWNAIDAEEFEKSWLLLADIYIQSAKYDMAEDLLKRCLRHNRSCCKAYEYMGYIMEKEQAYTDAALNYEMAWKYSNRTNPAVGYKLAFNYLKAKRYVDSIDICHQVLEAHPTYPKIRKDILDKARASLRP.

TPR repeat units lie at residues Glu-108–Ser-141, His-145–Thr-178, Ala-180–Phe-211, Ala-285–Gln-323, Ser-324–Ser-357, Leu-492–Tyr-525, Pro-563–Lys-596, Leu-617–Thr-650, Pro-722–Asp-755, Thr-757–Asn-789, Leu-791–Asn-822, Gly-831–Val-864, Ala-884–Asp-917, Lys-919–Asn-951, Glu-952–Asn-985, Pro-1023–Gly-1056, Glu-1197–Cys-1230, Lys-1232–Thr-1264, and Pro-1266–Tyr-1299.

The protein belongs to the TTC21 family. Component of the IFT complex A (IFT-A) complex. IFT-A complex is divided into a core subcomplex composed of IFT122:IFT140:WDR19 which is associated with TULP3 and a peripheral subcomplex composed of IFT43:WDR35:TTC21B. Interacts directy with WDR35 and TTC21B. Interacts with TTC25.

The protein resides in the cytoplasm. It localises to the cytoskeleton. It is found in the cilium axoneme. In terms of biological role, component of the IFT complex A (IFT-A), a complex required for retrograde ciliary transport and entry into cilia of G protein-coupled receptors (GPCRs). Essential for retrograde trafficking of IFT-1, IFT-B and GPCRs. Negatively modulates the SHH signal transduction. The polypeptide is Tetratricopeptide repeat protein 21B (Homo sapiens (Human)).